Reading from the N-terminus, the 853-residue chain is MKNKKYLQFGGIAAVILIVLFLVSLFSSDTRNFQEVDTSVAMAQLDAGNVAEAQIDDREQRVRLTLREPITVDEREGVEEILAQYPARTAPAIFEKVEASNTDSYTTNVTQESFLMSMLSFILPMVIIFGLLMFFLTRMQGGGMFGIGGSKAKQLTKDMPTNTFADVAGAEEAVDELHEIKDFLEDPTRYEALGAKIPRGVLLYGPPGTGKTLLARAVAGEAGVPFYSISGSDFVEMFVGVGASRVRDLFKQAKENSPCIIFVDEIDAVGRARGSGMGGGHDEREQTLNQLLVEMDGFGDRQGVILMAATNRPDVLDPALLRPGRFDRQIPVTNPDLRGREQILEVHAKGKPFAPDADIKALAKRTAGMSGADLANVLNEAALLTARVGGNVITADALEEATDRVVGGPRRSGKVISEKEKKVTAYHEGGHTLSAWALEDIERVYKVTILARGRTGGHAMTAQEDDKGMYNRNELFARLVFAMGGRSAEELVFGEPTTGASADIEMATKIARSMVTEYGMSPAVGMVKYGQEQGDPFSGRGGGGNLDHSQEVAATIDTEVQFLLDKAHEVSYSILAEYRDHLDRLAEKLLEKETLRRPDLEALFDDIVPRKVAEVFPDESTRFPRQENREPVKTPVELALERGEEPPKKFSILEASRATRERRRKELEAQGKLPVQPASSAGVAPAAGAAAGSYGTPPPADWSVPGSAGKHRSRAEEQPAEQGFPAQTPAQAPEQSPDSSGGRPNPYATPTASGEHPGMKAYGFGDSELMDQSTGAEHTPGNVSQESPTEMIGFRLPDHERSDYPEKAQKESVLDASETTEMPVVPDQPIDGDSGKSAEGTQENPENEGDNRG.

Topologically, residues 1 to 5 are cytoplasmic; that stretch reads MKNKK. Residues 6–26 traverse the membrane as a helical segment; sequence YLQFGGIAAVILIVLFLVSLF. The Extracellular segment spans residues 27–113; the sequence is SSDTRNFQEV…SYTTNVTQES (87 aa). A helical transmembrane segment spans residues 114 to 134; the sequence is FLMSMLSFILPMVIIFGLLMF. The Cytoplasmic portion of the chain corresponds to 135-853; the sequence is FLTRMQGGGM…NPENEGDNRG (719 aa). 205 to 212 provides a ligand contact to ATP; that stretch reads GPPGTGKT. Residue H427 coordinates Zn(2+). E428 is an active-site residue. The Zn(2+) site is built by H431 and D503. Basic and acidic residues-rich tracts occupy residues 619 to 632 and 639 to 648; these read ESTRFPRQENREPV and ALERGEEPPK. The segment at 619-853 is disordered; that stretch reads ESTRFPRQEN…NPENEGDNRG (235 aa). Positions 677-695 are enriched in low complexity; sequence PASSAGVAPAAGAAAGSYG. Composition is skewed to polar residues over residues 728–739 and 770–788; these read TPAQAPEQSPDS and MDQSTGAEHTPGNVSQESP. The span at 796 to 813 shows a compositional bias: basic and acidic residues; the sequence is LPDHERSDYPEKAQKESV.

It in the central section; belongs to the AAA ATPase family. In the C-terminal section; belongs to the peptidase M41 family. As to quaternary structure, homohexamer. Zn(2+) serves as cofactor.

It localises to the cell membrane. In terms of biological role, acts as a processive, ATP-dependent zinc metallopeptidase for both cytoplasmic and membrane proteins. Plays a role in the quality control of integral membrane proteins. The polypeptide is ATP-dependent zinc metalloprotease FtsH (Corynebacterium glutamicum (strain ATCC 13032 / DSM 20300 / JCM 1318 / BCRC 11384 / CCUG 27702 / LMG 3730 / NBRC 12168 / NCIMB 10025 / NRRL B-2784 / 534)).